A 63-amino-acid polypeptide reads, in one-letter code: Hyphancin-3G (63 aa).

The N-terminal stretch at Met-1 to Ala-22 is a signal peptide. Residues Val-23–Pro-26 constitute a propeptide, removed by a dipeptidylpeptidase. Leu-61 is subject to Leucine amide.

Belongs to the cecropin family.

The protein localises to the secreted. In terms of biological role, has antibacterial activity. This is Hyphancin-3G from Hyphantria cunea (Fall webworm moth).